Here is a 409-residue protein sequence, read N- to C-terminus: MARAKFERTKPHVNIGTIGHVDHGKTTLTAAITMTLAALGNAQAKKYDEIDAAPEEKARGITINTAHVEYETASRHYAHVDCPGHADYVKNMITGAAQMDGGILVVSAADGPMPQTREHILLARQVGVPNLVVFLNKKDMVDDEELLELVELEVRELLTNYDFAGDDIPIIAGSAKEALEYMTKNPKAQKGDNEWVDAIYELMEAVDSYIPTPERDIDKPFLMAVEDVFSITGRGTVATGRIERGIVKVGDNVELVGIRETRPTTVTGIEMFKKSLDQGMAGDNAGILLRGIQKTDIERGMVIAKPGTIKPHTQFEGEVYVLSKEEGGRHTPFFKNYRPQFYVRTTDVTGTIQDYTADDGSTVEMVMPGDRIKMTVELINPIAIEQGMRFAIREGGRTIGSGVISKIIK.

The 205-residue stretch at 10 to 214 (KPHVNIGTIG…AVDSYIPTPE (205 aa)) folds into the tr-type G domain. The segment at 19 to 26 (GHVDHGKT) is G1. 19–26 (GHVDHGKT) serves as a coordination point for GTP. T26 contributes to the Mg(2+) binding site. The G2 stretch occupies residues 60–64 (GITIN). The segment at 81–84 (DCPG) is G3. GTP-binding positions include 81–85 (DCPGH) and 136–139 (NKKD). The interval 136–139 (NKKD) is G4. The segment at 174–176 (SAK) is G5.

Belongs to the TRAFAC class translation factor GTPase superfamily. Classic translation factor GTPase family. EF-Tu/EF-1A subfamily. As to quaternary structure, monomer.

The protein localises to the cytoplasm. The catalysed reaction is GTP + H2O = GDP + phosphate + H(+). GTP hydrolase that promotes the GTP-dependent binding of aminoacyl-tRNA to the A-site of ribosomes during protein biosynthesis. This Microcystis aeruginosa (strain NIES-843 / IAM M-2473) protein is Elongation factor Tu.